The chain runs to 141 residues: Putative 8-oxo-dGTP diphosphatase 2 (141 aa).

Positions 2–131 constitute a Nudix hydrolase domain; it reads LNQIVVAGAI…WIADLARTLN (130 aa). The Mg(2+) site is built by glycine 37, glutamate 52, glutamate 55, and glutamate 56. The Nudix box motif lies at 37–58; the sequence is GKVAAGETERAALARELAEELG.

The protein belongs to the Nudix hydrolase family. Mg(2+) serves as cofactor. Requires Mn(2+) as cofactor.

It carries out the reaction 8-oxo-dGTP + H2O = 8-oxo-dGMP + diphosphate + H(+). Its function is as follows. May be involved in the GO system responsible for removing an oxidatively damaged form of guanine (7,8-dihydro-8-oxoguanine, 8-oxo-dGTP) from DNA and the nucleotide pool. 8-oxo-dGTP is inserted opposite dA and dC residues of template DNA with almost equal efficiency thus leading to A.T to G.C transversions. MutT specifically degrades 8-oxo-dGTP to the monophosphate. This Mycobacterium tuberculosis (strain CDC 1551 / Oshkosh) protein is Putative 8-oxo-dGTP diphosphatase 2 (mutT2).